Consider the following 439-residue polypeptide: Xylose isomerase (439 aa).

Catalysis depends on residues His-101 and Asp-104. Positions 232, 268, 271, 296, 307, 309, and 339 each coordinate Mg(2+).

This sequence belongs to the xylose isomerase family. In terms of assembly, homotetramer. Requires Mg(2+) as cofactor.

It is found in the cytoplasm. The catalysed reaction is alpha-D-xylose = alpha-D-xylulofuranose. This Thermoanaerobacterium saccharolyticum protein is Xylose isomerase (xylA).